A 1891-amino-acid polypeptide reads, in one-letter code: Protein TIC 214 (1891 aa).

Transmembrane regions (helical) follow at residues 18–38 (IINSVVVVGLYYGFLTTFSIG), 64–84 (FITGQLMMFISIYYAPLHLAL), 87–107 (PHTITVLALPYLLFHFFWNNH), 124–144 (LSIQCVFLNNLIFQLFNHFIL), 172–192 (VGWLIGHILFMKWLGLVLVWI), and 221–241 (IFSILLFITCVYYLGRIPSPI). Disordered stretches follow at residues 248 to 300 (EASK…EGWD), 788 to 807 (EEQTKREEKKEKDKKEDNKR), and 1580 to 1607 (KNRSQEAKEPPSQRERGSDIENKGNLSP). Positions 256–268 (VESEEERDVEIET) are enriched in acidic residues. The span at 1582-1601 (RSQEAKEPPSQRERGSDIEN) shows a compositional bias: basic and acidic residues.

Belongs to the TIC214 family. In terms of assembly, part of the Tic complex.

The protein localises to the plastid. The protein resides in the chloroplast inner membrane. In terms of biological role, involved in protein precursor import into chloroplasts. May be part of an intermediate translocation complex acting as a protein-conducting channel at the inner envelope. This Solanum lycopersicum (Tomato) protein is Protein TIC 214.